The following is a 355-amino-acid chain: Protein RecA (355 aa).

Residue 65 to 72 coordinates ATP; the sequence is GPESSGKT.

This sequence belongs to the RecA family.

It is found in the cytoplasm. Can catalyze the hydrolysis of ATP in the presence of single-stranded DNA, the ATP-dependent uptake of single-stranded DNA by duplex DNA, and the ATP-dependent hybridization of homologous single-stranded DNAs. It interacts with LexA causing its activation and leading to its autocatalytic cleavage. This is Protein RecA from Pseudomonas putida (strain ATCC 47054 / DSM 6125 / CFBP 8728 / NCIMB 11950 / KT2440).